The primary structure comprises 192 residues: uncharacterized protein (192 aa).

A run of 6 helical transmembrane segments spans residues 5–22, 42–61, 66–88, 101–118, 122–139, and 159–181; these read VPPL…GIGL, FLFL…HYVY, LRFL…SGKL, WGLL…ALNL, LVMW…STIL, and ALLL…LWLF.

It is found in the cell membrane. This is an uncharacterized protein from Treponema pallidum (strain Nichols).